We begin with the raw amino-acid sequence, 195 residues long: FMN-dependent NADH:quinone oxidoreductase (195 aa).

FMN-binding positions include S10, 16–18 (SQS), 91–94 (MYNF), and 135–138 (TRGG).

The protein belongs to the azoreductase type 1 family. Homodimer. FMN is required as a cofactor.

The enzyme catalyses 2 a quinone + NADH + H(+) = 2 a 1,4-benzosemiquinone + NAD(+). It carries out the reaction N,N-dimethyl-1,4-phenylenediamine + anthranilate + 2 NAD(+) = 2-(4-dimethylaminophenyl)diazenylbenzoate + 2 NADH + 2 H(+). In terms of biological role, quinone reductase that provides resistance to thiol-specific stress caused by electrophilic quinones. Its function is as follows. Also exhibits azoreductase activity. Catalyzes the reductive cleavage of the azo bond in aromatic azo compounds to the corresponding amines. In Vibrio vulnificus (strain YJ016), this protein is FMN-dependent NADH:quinone oxidoreductase.